Reading from the N-terminus, the 197-residue chain is Casparian strip membrane protein 5 (197 aa).

The Cytoplasmic portion of the chain corresponds to 1-34 (MSTTIDMPGSSKAAKAGKPVLVTTPSRPGGWKKG). Residues 35–55 (VAIMDFILRLGAIAAALGAAA) form a helical membrane-spanning segment. Residues 56 to 84 (TMGLSDQTLPFFTQFFQFEASYDSFTTFQ) are Extracellular-facing. Residues 85–105 (FFVITMALVAGYLVLSLPLSI) traverse the membrane as a helical segment. Topologically, residues 106 to 117 (VAVVRPHAAGPR) are cytoplasmic. The chain crosses the membrane as a helical span at residues 118-138 (LFLIILDTVFLTLATASGASA). Topologically, residues 139 to 171 (ASIVYLAHNGNQDTNWIAICNQFGDFCAQTSGA) are extracellular. A helical membrane pass occupies residues 172 to 192 (VVSSLVAVLVFVLLIVMSALV). Residues 193 to 197 (LGKKH) are Cytoplasmic-facing.

This sequence belongs to the Casparian strip membrane proteins (CASP) family. Homodimer and heterodimers.

It is found in the cell membrane. Regulates membrane-cell wall junctions and localized cell wall deposition. Required for establishment of the Casparian strip membrane domain (CSD) and the subsequent formation of Casparian strips, a cell wall modification of the root endodermis that determines an apoplastic barrier between the intraorganismal apoplasm and the extraorganismal apoplasm and prevents lateral diffusion. The protein is Casparian strip membrane protein 5 of Lotus japonicus (Lotus corniculatus var. japonicus).